We begin with the raw amino-acid sequence, 96 residues long: Putative pterin-4-alpha-carbinolamine dehydratase (96 aa).

This sequence belongs to the pterin-4-alpha-carbinolamine dehydratase family.

It catalyses the reaction (4aS,6R)-4a-hydroxy-L-erythro-5,6,7,8-tetrahydrobiopterin = (6R)-L-erythro-6,7-dihydrobiopterin + H2O. The polypeptide is Putative pterin-4-alpha-carbinolamine dehydratase (Caulobacter sp. (strain K31)).